We begin with the raw amino-acid sequence, 468 residues long: Lactate utilization protein B (468 aa).

2 4Fe-4S ferredoxin-type domains span residues 303–333 and 352–381; these read GTQFQSVLQCIRCAACINVCPVYRHIGGHAY and YENYKELPYASSLCGACTEACPVKIPLHEL. Residues Cys-312, Cys-315, Cys-318, Cys-322, Cys-365, Cys-368, and Cys-372 each coordinate [4Fe-4S] cluster. Residues 442-468 form a disordered region; the sequence is PAWTDSKDLPQPNKQTVRDWFKKRGNA. Over residues 457 to 468 the composition is skewed to basic and acidic residues; the sequence is TVRDWFKKRGNA.

Belongs to the LutB/YkgF family.

Functionally, is involved in L-lactate degradation and allows cells to grow with lactate as the sole carbon source. Has probably a role as an electron transporter during oxidation of L-lactate. This Exiguobacterium sp. (strain ATCC BAA-1283 / AT1b) protein is Lactate utilization protein B.